We begin with the raw amino-acid sequence, 485 residues long: E3 ubiquitin-protein ligase TRIM68 (485 aa).

The RING-type zinc-finger motif lies at 16-61 (CPICMTFLREPMSIDCGHSFCHSCLSGLWEIPGESQNWGYTCPLCR). The segment at 93 to 134 (LKGDLCERHGEKLKMFCKEDVLIMCEACSQSPEHEAHSVVPM) adopts a B box-type zinc-finger fold. Zn(2+) contacts are provided by C98, H101, C120, and H126. Residues 207-239 (AEVAAALASLQREAAETMQKLELNHSELIQQSQ) are a coiled coil. In terms of domain architecture, B30.2/SPRY spans 285–481 (LKTDCRVLGL…NTAPLAICSL (197 aa)).

It belongs to the TRIM/RBCC family. In terms of assembly, interacts with AR/androgen receptor (via ligand-binding domain). Interacts with KAT5/TIP60. Auto-ubiquitinated. In terms of tissue distribution, widely expressed. Expressed at high levels in prostate cancer cell lines. Up-regulation could be restricted to androgen-dependent cells.

The protein localises to the cytoplasm. It localises to the perinuclear region. The protein resides in the nucleus. The catalysed reaction is S-ubiquitinyl-[E2 ubiquitin-conjugating enzyme]-L-cysteine + [acceptor protein]-L-lysine = [E2 ubiquitin-conjugating enzyme]-L-cysteine + N(6)-ubiquitinyl-[acceptor protein]-L-lysine.. Its pathway is protein modification; protein ubiquitination. Functions as a ubiquitin E3 ligase. Acts as a coactivator of androgen receptor (AR) depending on its ubiquitin ligase activity. The protein is E3 ubiquitin-protein ligase TRIM68 (TRIM68) of Homo sapiens (Human).